A 247-amino-acid polypeptide reads, in one-letter code: UPF0259 membrane protein BUAP5A_271 (247 aa).

The next 6 membrane-spanning stretches (helical) occupy residues 20–40 (IGAI…IDMF), 85–105 (IMES…LISV), 114–134 (IVSS…LNFL), 137–157 (FIIQ…SIIL), 188–208 (IIGP…MLLA), and 218–238 (LFLI…IYLF).

The protein belongs to the UPF0259 family.

The protein resides in the cell membrane. In Buchnera aphidicola subsp. Acyrthosiphon pisum (strain 5A), this protein is UPF0259 membrane protein BUAP5A_271.